Consider the following 1005-residue polypeptide: Small G protein signaling modulator 2 (1005 aa).

The 158-residue stretch at 34–191 (HEDSSHIIAL…EYTKLKTADH (158 aa)) folds into the RUN domain. Disordered regions lie at residues 95–121 (QAEGRKPSGGSQEALRKQGSTGGKAPA) and 205–236 (HRIRGPPNRQDSPAKRPALGIRKRHSSGSASE). 2 positions are modified to phosphoserine: Ser402 and Leu444. In terms of domain architecture, Rab-GAP TBC spans 566-938 (GVEHEIRKDV…AVWEVIWAAR (373 aa)). 2 disordered regions span residues 657 to 687 (FISVDDLEPSGPQDLEDSKPKREQEPGAGTP) and 729 to 761 (GFEDDGAGEDGSEGPATAAHTFPGPHDPGQETL). Residues 672-681 (EDSKPKREQE) are compositionally biased toward basic and acidic residues. A compositionally biased stretch (acidic residues) spans 730-740 (FEDDGAGEDGS).

This sequence belongs to the RUTBC family. As to quaternary structure, interacts with RAB4A, RAB11A, RAP1A, RAP1B, RAP2A and RAP2B. No interaction with RAB27A. Interacts with RAB9A. Widely expressed.

It localises to the cytoplasm. The protein resides in the melanosome. Its function is as follows. Possesses GTPase activator activity towards RAB32, RAB33B and RAB38. Regulates the trafficking of melanogenic enzymes TYR, TYRP1 and DCT/TYRP2 to melanosomes in melanocytes by inactivating RAB32 and RAB38. Inhibits RAB32 and RAB38 activation both directly by promoting their GTPase activity and indirectly by disrupting the RAB9A-HPS4 interaction which is required for RAB32/38 activation. The polypeptide is Small G protein signaling modulator 2 (Sgsm2) (Mus musculus (Mouse)).